The primary structure comprises 345 residues: MSDLVITRPDDWHLHLRDGDALATTVPATARLFSRAIVMPNLVPPVTHTAQAEAYRHRILSHVPAGAAFDPLMTLYLTNNTSPEEIVAARQSGIVYGCKLYPAGATTNSDAGVTDVANVFSVLEKMSDMGMPLLIHGEVVQADVDIFDREKRFIDETLTPLTERFPNLKIVLEHITTRDAVEFVNQAGSNVGATITAHHLLYNRNHMLVGGIRPHFYCLPILKRSEHQLALRDAAASGSDRFFLGTDSAPHPKEKKEAACGCAGCFTAPSALELYAEAFDELGALDKLEGFASLHGPTFYGLPINSGKVRLSKQEWTMPASMALGDSSIVPFRAGETIRWKAELL.

Residues His-13 and His-15 each contribute to the Zn(2+) site. Substrate-binding positions include 15-17 (HLR) and Asn-41. The Zn(2+) site is built by Lys-99, His-136, and His-174. An N6-carboxylysine modification is found at Lys-99. His-136 contributes to the substrate binding site. Residue Leu-219 participates in substrate binding. Asp-247 serves as a coordination point for Zn(2+). Residue Asp-247 is part of the active site. Residues His-251 and Ala-263 each coordinate substrate.

Belongs to the metallo-dependent hydrolases superfamily. DHOase family. Class II DHOase subfamily. In terms of assembly, homodimer. Zn(2+) is required as a cofactor.

It carries out the reaction (S)-dihydroorotate + H2O = N-carbamoyl-L-aspartate + H(+). Its pathway is pyrimidine metabolism; UMP biosynthesis via de novo pathway; (S)-dihydroorotate from bicarbonate: step 3/3. In terms of biological role, catalyzes the reversible cyclization of carbamoyl aspartate to dihydroorotate. The chain is Dihydroorotase from Hahella chejuensis (strain KCTC 2396).